Consider the following 718-residue polypeptide: Exostosin-2 (718 aa).

At Met-1 to Tyr-25 the chain is on the cytoplasmic side. The helical; Signal-anchor for type II membrane protein transmembrane segment at Tyr-26 to Trp-46 threads the bilayer. The Lumenal segment spans residues Pro-47–Leu-718. 4 disulfides stabilise this stretch: Cys-85-Cys-90, Cys-96-Cys-151, Cys-286-Cys-300, and Cys-318-Cys-339. The N-linked (GlcNAc...) asparagine glycan is linked to Asn-288. Residues Leu-461, Arg-465, Asn-490, and Asn-517 each coordinate UDP. UDP-N-acetyl-alpha-D-glucosamine contacts are provided by Arg-465, Asn-490, Asn-517, Arg-522, Asp-538, Asp-539, and Asp-540. UDP is bound by residues Asp-538 and Asp-539. A Mn(2+)-binding site is contributed by Asp-540. Residues Tyr-582 and Ser-584 each coordinate a protein. Cys-626 and Cys-676 form a disulfide bridge. UDP-N-acetyl-alpha-D-glucosamine contacts are provided by Glu-627 and Asp-628. Asn-637 carries an N-linked (GlcNAc...) asparagine glycan. A protein-binding residues include Lys-651 and Lys-653. Position 673 (Arg-673) interacts with UDP-N-acetyl-alpha-D-glucosamine.

This sequence belongs to the glycosyltransferase 47 family. In terms of assembly, part of the heparan sulfate polymerase, a dimeric complex composed of EXT1 and EXT2. Could also form homooligomeric complexes. Interacts with NDST1. Interacts with GALNT5. It depends on Mn(2+) as a cofactor. N-glycosylated at Asn-637. In terms of processing, a soluble form is generated by proteolytic processing. In terms of tissue distribution, expressed in heart, brain, spleen, lung, liver, skeletal muscle and testis. Heart shows a high expression.

The protein localises to the golgi apparatus membrane. Its subcellular location is the golgi apparatus. The protein resides in the cis-Golgi network membrane. It is found in the endoplasmic reticulum membrane. It localises to the secreted. It carries out the reaction 3-O-{[(1-&gt;4)-beta-D-GlcA-(1-&gt;4)-alpha-D-GlcNAc](n)-(1-&gt;4)-beta-D-GlcA-(1-&gt;3)-beta-D-Gal-(1-&gt;3)-beta-D-Gal-(1-&gt;4)-beta-D-Xyl}-L-seryl-[protein] + UDP-N-acetyl-alpha-D-glucosamine = 3-O-{alpha-D-GlcNAc-[(1-&gt;4)-beta-D-GlcA-(1-&gt;4)-alpha-D-GlcNAc](n)-(1-&gt;4)-beta-D-GlcA-(1-&gt;3)-beta-D-Gal-(1-&gt;3)-beta-D-Gal-(1-&gt;4)-beta-D-Xyl}-L-seryl-[protein] + UDP + H(+). The protein operates within protein modification; protein glycosylation. Its function is as follows. Glycosyltransferase forming with EXT1 the heterodimeric heparan sulfate polymerase which catalyzes the elongation of the heparan sulfate glycan backbone. Glycan backbone extension consists in the alternating transfer of (1-&gt;4)-beta-D-GlcA and (1-&gt;4)-alpha-D-GlcNAc residues from their respective UDP-sugar donors. Both EXT1 and EXT2 are required for the full activity of the polymerase since EXT1 bears the N-acetylglucosaminyl-proteoglycan 4-beta-glucuronosyltransferase activity within the complex while EXT2 carries the glucuronosyl-N-acetylglucosaminyl-proteoglycan 4-alpha-N-acetylglucosaminyltransferase activity. Heparan sulfate proteoglycans are ubiquitous components of the extracellular matrix and play an important role in tissue homeostasis and signaling. This chain is Exostosin-2, found in Mus musculus (Mouse).